Consider the following 134-residue polypeptide: Transcription antitermination protein NusB (134 aa).

The protein belongs to the NusB family.

In terms of biological role, involved in transcription antitermination. Required for transcription of ribosomal RNA (rRNA) genes. Binds specifically to the boxA antiterminator sequence of the ribosomal RNA (rrn) operons. This chain is Transcription antitermination protein NusB, found in Halothermothrix orenii (strain H 168 / OCM 544 / DSM 9562).